The sequence spans 160 residues: SsrA-binding protein (160 aa).

This sequence belongs to the SmpB family.

It localises to the cytoplasm. In terms of biological role, required for rescue of stalled ribosomes mediated by trans-translation. Binds to transfer-messenger RNA (tmRNA), required for stable association of tmRNA with ribosomes. tmRNA and SmpB together mimic tRNA shape, replacing the anticodon stem-loop with SmpB. tmRNA is encoded by the ssrA gene; the 2 termini fold to resemble tRNA(Ala) and it encodes a 'tag peptide', a short internal open reading frame. During trans-translation Ala-aminoacylated tmRNA acts like a tRNA, entering the A-site of stalled ribosomes, displacing the stalled mRNA. The ribosome then switches to translate the ORF on the tmRNA; the nascent peptide is terminated with the 'tag peptide' encoded by the tmRNA and targeted for degradation. The ribosome is freed to recommence translation, which seems to be the essential function of trans-translation. In Rhodospirillum rubrum (strain ATCC 11170 / ATH 1.1.1 / DSM 467 / LMG 4362 / NCIMB 8255 / S1), this protein is SsrA-binding protein.